The following is a 259-amino-acid chain: L-arginine-binding protein (259 aa).

The first 21 residues, 1–21 (MKKLALLGALALSVLSLPTFA), serve as a signal peptide directing secretion.

The protein belongs to the bacterial solute-binding protein 3 family.

The protein localises to the periplasm. Binds L-arginine with high affinity. Shows no measurable affinity for L-ornithine. The chain is L-arginine-binding protein from Pseudomonas aeruginosa (strain ATCC 15692 / DSM 22644 / CIP 104116 / JCM 14847 / LMG 12228 / 1C / PRS 101 / PAO1).